Reading from the N-terminus, the 239-residue chain is Insulin-like growth factor-binding protein 3 receptor (239 aa).

Residues 1–38 (MGSCQAGHYLHFCLAHHPPLVCATLILLLLGLSGLGLG) form the signal peptide. At 39 to 205 (GFLLTHRTDL…EELTLCGSRL (167 aa)) the chain is on the extracellular side. N101 and N167 each carry an N-linked (GlcNAc...) asparagine glycan. A helical membrane pass occupies residues 206–226 (LVLGFFLILFCGLCCLTAACF). Residues 227-239 (HPRRESHWSRTRL) are Cytoplasmic-facing.

As to quaternary structure, interacts with IGFBP3. Interacts with CASP8.

It localises to the cell membrane. Cell death receptor specific for IGFBP3, may mediate caspase-8-dependent apoptosis upon ligand binding. The protein is Insulin-like growth factor-binding protein 3 receptor (TMEM219) of Bos taurus (Bovine).